Consider the following 563-residue polypeptide: Probable ganciclovir kinase (563 aa).

Over residues 1-16 the composition is skewed to polar residues; it reads MDNGVETPQGQKTQPI. Residues 1-33 form a disordered region; sequence MDNGVETPQGQKTQPINLPPDRKRLRKHDGLGK. Residues 202 to 210 and K219 each bind ATP; that span reads LGVGAYGKV. Catalysis depends on D314, which acts as the Proton acceptor.

This sequence belongs to the protein kinase superfamily. Tyr protein kinase family. HCMV ganciclovir subfamily.

Phosphorylates the antiviral nucleoside analog ganciclovir. The sequence is that of Probable ganciclovir kinase (U69) from Human herpesvirus 6B (strain Z29) (HHV-6 variant B).